A 355-amino-acid chain; its full sequence is Probable dual-specificity RNA methyltransferase RlmN (355 aa).

The active-site Proton acceptor is the glutamate 92. The Radical SAM core domain occupies 98–330; it reads FHYGLSVCVT…TELGINCGVR (233 aa). Cysteine 105 and cysteine 341 are oxidised to a cystine. [4Fe-4S] cluster-binding residues include cysteine 112, cysteine 116, and cysteine 119. S-adenosyl-L-methionine contacts are provided by residues 164 to 165, serine 196, 219 to 221, and asparagine 297; these read GE and SLH. Cysteine 341 (S-methylcysteine intermediate) is an active-site residue.

This sequence belongs to the radical SAM superfamily. RlmN family. Requires [4Fe-4S] cluster as cofactor.

Its subcellular location is the cytoplasm. It catalyses the reaction adenosine(2503) in 23S rRNA + 2 reduced [2Fe-2S]-[ferredoxin] + 2 S-adenosyl-L-methionine = 2-methyladenosine(2503) in 23S rRNA + 5'-deoxyadenosine + L-methionine + 2 oxidized [2Fe-2S]-[ferredoxin] + S-adenosyl-L-homocysteine. The catalysed reaction is adenosine(37) in tRNA + 2 reduced [2Fe-2S]-[ferredoxin] + 2 S-adenosyl-L-methionine = 2-methyladenosine(37) in tRNA + 5'-deoxyadenosine + L-methionine + 2 oxidized [2Fe-2S]-[ferredoxin] + S-adenosyl-L-homocysteine. Functionally, specifically methylates position 2 of adenine 2503 in 23S rRNA and position 2 of adenine 37 in tRNAs. The polypeptide is Probable dual-specificity RNA methyltransferase RlmN (Oceanobacillus iheyensis (strain DSM 14371 / CIP 107618 / JCM 11309 / KCTC 3954 / HTE831)).